Consider the following 897-residue polypeptide: Patched domain-containing protein 1 (897 aa).

The helical transmembrane segment at 25 to 45 threads the bilayer; that stretch reads PVFFLTVPAVLTIIFGSTVLS. N-linked (GlcNAc...) asparagine glycosylation is found at Asn-132, Asn-167, and Asn-179. A run of 2 helical transmembrane segments spans residues 271–291 and 306–326; these read GVLA…AATI and GLLG…IFFI. Residues 273 to 433 form the SSD domain; it reads LAKSEVLVSL…FSFYGSCLVF (161 aa). Residue Asn-332 is glycosylated (N-linked (GlcNAc...) asparagine). 4 consecutive transmembrane segments (helical) span residues 335-355, 377-397, 414-434, and 506-526; these read LLGI…ELLA, VMVC…MGAS, VAVL…LVFA, and PFVV…CLQI. Residues Asn-572 and Asn-603 are each glycosylated (N-linked (GlcNAc...) asparagine). 3 consecutive transmembrane segments (helical) span residues 701-721, 727-747, and 754-774; these read PILT…FLVI, FWLI…MTLW, and ISIL…APHL. Asn-803 carries an N-linked (GlcNAc...) asparagine glycan. 2 helical membrane passes run 806-826 and 831-851; these read CFVI…YTLF and LTAG…LTFF. Residues 856-866 are compositionally biased toward basic residues; sequence KRHKKKKRAKR. Residues 856–881 form a disordered region; sequence KRHKKKKRAKRKEREREREREREREE. A compositionally biased stretch (basic and acidic residues) spans 867-881; it reads KEREREREREREREE.

The protein belongs to the patched family.

It is found in the cell membrane. It localises to the cell projection. The protein resides in the dendritic spine. Functionally, can bind cholesterol in vitro. The sequence is that of Patched domain-containing protein 1 (ptchd1) from Danio rerio (Zebrafish).